Reading from the N-terminus, the 115-residue chain is Toxin-like structure LSTX-D2 (115 aa).

Residues 1 to 22 form the signal peptide; that stretch reads MKVLVLFSVLFLTLFSYSSTEA. A propeptide spanning residues 23 to 44 is cleaved from the precursor; that stretch reads IDEFDSDAEDDMLSLMANEQVR. Intrachain disulfides connect Cys48-Cys63, Cys55-Cys72, Cys62-Cys87, and Cys74-Cys85.

It belongs to the neurotoxin 19 (CSTX) family. 01 subfamily. In terms of tissue distribution, expressed by the venom gland.

It localises to the secreted. This Lycosa singoriensis (Wolf spider) protein is Toxin-like structure LSTX-D2.